A 282-amino-acid chain; its full sequence is Succinate dehydrogenase [ubiquinone] iron-sulfur subunit, mitochondrial (282 aa).

The 2Fe-2S ferredoxin-type domain occupies 43-131; it reads YRFNPEAPGA…STKIYPLPHM (89 aa). Positions 91, 96, 99, and 111 each coordinate [2Fe-2S] cluster. In terms of domain architecture, 4Fe-4S ferredoxin-type spans 174–204; sequence ERDRLDGLYECILCACCSTSCPSYWWNADKY. Positions 184, 187, and 190 each coordinate [4Fe-4S] cluster. A [3Fe-4S] cluster-binding site is contributed by C194. W199 contacts a ubiquinone. [3Fe-4S] cluster contacts are provided by C241 and C247. C251 is a [4Fe-4S] cluster binding site.

This sequence belongs to the succinate dehydrogenase/fumarate reductase iron-sulfur protein family. Component of complex II composed of four subunits: a flavoprotein (FP), an iron-sulfur protein (IP), and a cytochrome b composed of a large and a small subunit. [2Fe-2S] cluster is required as a cofactor. It depends on [3Fe-4S] cluster as a cofactor. Requires [4Fe-4S] cluster as cofactor.

The protein resides in the mitochondrion inner membrane. The enzyme catalyses a quinone + succinate = fumarate + a quinol. It participates in carbohydrate metabolism; tricarboxylic acid cycle; fumarate from succinate (eukaryal route): step 1/1. Its function is as follows. Iron-sulfur protein (IP) subunit of succinate dehydrogenase (SDH) that is involved in complex II of the mitochondrial electron transport chain and is responsible for transferring electrons from succinate to ubiquinone (coenzyme Q). In Caenorhabditis briggsae, this protein is Succinate dehydrogenase [ubiquinone] iron-sulfur subunit, mitochondrial.